A 674-amino-acid chain; its full sequence is MAAKDIDDTKPDTAADEDASFDMSQAAVKRMIGEAKERGYITIDQLNAVMPPETVSGEQIEDVMSMLSEMGINVVEGEEVEESEGGEVVETGSGSREIAVAGAAGETLDRTDDPVRMYLREMGSVELLSREGEIAIAKRIEAGRNTMIAGLCESPLTFQAITIWRDELLSEEILLRDVIDLEATFGRSLDGDEGMEGMEGIEGPVVEGLDLETAEGAAPAARRPASDEPEYDADGNPISRIDEEEDDDDSSNMSLAAMEAALKPKVLETLELIARDYAKLAEMQDLRMSATLNEDGTFSVAEEAAYQKLRSEIVLLVNELHLHNNRIEALIDQLYGINRKIMSIDSGMVKLADAARINRREFIDEYRGYELDPTWMDRMSAKPARAWVTLFEKSRDKVEDLRHEMAQVGQYVGVDISEFRRIVNQVQKGEKEARQAKKEMVEANLRLVISIAKKYTNRGLQFLDLIQEGNIGLMKAVDKFEYRRGYKFSTYATWWIRQAITRSIADQARTIRIPVHMIETINKLVRTGRQMLHEIGREPTPEELAEKLQMPLEKVRKVMKIAKEPISLETPIGDEEDSQLGDFIEDKNAILPLDSAIQENLKETTTRVLASLTPREERVLRMRFGIGMNTDHTLEEVGQQFSVTRERIRQIEAKALRKLKHPSRSRKLRSFLDQ.

Residues 214–252 form a disordered region; it reads AEGAAPAARRPASDEPEYDADGNPISRIDEEEDDDDSSN. Positions 440–510 are sigma-70 factor domain-2; that stretch reads MVEANLRLVI…TRSIADQART (71 aa). Positions 464-467 match the Interaction with polymerase core subunit RpoC motif; that stretch reads DLIQ. The segment at 519–595 is sigma-70 factor domain-3; the sequence is ETINKLVRTG…DKNAILPLDS (77 aa). The tract at residues 608-661 is sigma-70 factor domain-4; it reads VLASLTPREERVLRMRFGIGMNTDHTLEEVGQQFSVTRERIRQIEAKALRKLKH. The segment at residues 634-653 is a DNA-binding region (H-T-H motif); that stretch reads LEEVGQQFSVTRERIRQIEA.

This sequence belongs to the sigma-70 factor family. RpoD/SigA subfamily. As to quaternary structure, interacts transiently with the RNA polymerase catalytic core.

It is found in the cytoplasm. Sigma factors are initiation factors that promote the attachment of RNA polymerase to specific initiation sites and are then released. This sigma factor is the primary sigma factor during exponential growth. This is RNA polymerase sigma factor RpoD from Rhodobacter capsulatus (strain ATCC BAA-309 / NBRC 16581 / SB1003).